Reading from the N-terminus, the 277-residue chain is Energy-coupling factor transporter ATP-binding protein EcfA1 (277 aa).

Residues 5-242 form the ABC transporter domain; that stretch reads VKVNNISFEY…IKMLKEIGLD (238 aa). 41-48 contacts ATP; it reads GHNGSGKS.

This sequence belongs to the ABC transporter superfamily. Energy-coupling factor EcfA family. Forms a stable energy-coupling factor (ECF) transporter complex composed of 2 membrane-embedded substrate-binding proteins (S component), 2 ATP-binding proteins (A component) and 2 transmembrane proteins (T component).

It is found in the cell membrane. ATP-binding (A) component of a common energy-coupling factor (ECF) ABC-transporter complex. Unlike classic ABC transporters this ECF transporter provides the energy necessary to transport a number of different substrates. This chain is Energy-coupling factor transporter ATP-binding protein EcfA1, found in Clostridioides difficile (strain 630) (Peptoclostridium difficile).